We begin with the raw amino-acid sequence, 94 residues long: Acylphosphatase (94 aa).

One can recognise an Acylphosphatase-like domain in the interval alanine 7 to glycine 94. Active-site residues include arginine 22 and asparagine 40.

It belongs to the acylphosphatase family.

The catalysed reaction is an acyl phosphate + H2O = a carboxylate + phosphate + H(+). The sequence is that of Acylphosphatase (acyP) from Rhizobium etli (strain ATCC 51251 / DSM 11541 / JCM 21823 / NBRC 15573 / CFN 42).